A 79-amino-acid chain; its full sequence is ATP synthase subunit c (79 aa).

2 helical membrane passes run isoleucine 11–leucine 31 and leucine 59–isoleucine 79.

This sequence belongs to the ATPase C chain family. As to quaternary structure, F-type ATPases have 2 components, F(1) - the catalytic core - and F(0) - the membrane proton channel. F(1) has five subunits: alpha(3), beta(3), gamma(1), delta(1), epsilon(1). F(0) has three main subunits: a(1), b(2) and c(10-14). The alpha and beta chains form an alternating ring which encloses part of the gamma chain. F(1) is attached to F(0) by a central stalk formed by the gamma and epsilon chains, while a peripheral stalk is formed by the delta and b chains.

It is found in the cell membrane. F(1)F(0) ATP synthase produces ATP from ADP in the presence of a proton or sodium gradient. F-type ATPases consist of two structural domains, F(1) containing the extramembraneous catalytic core and F(0) containing the membrane proton channel, linked together by a central stalk and a peripheral stalk. During catalysis, ATP synthesis in the catalytic domain of F(1) is coupled via a rotary mechanism of the central stalk subunits to proton translocation. Its function is as follows. Key component of the F(0) channel; it plays a direct role in translocation across the membrane. A homomeric c-ring of between 10-14 subunits forms the central stalk rotor element with the F(1) delta and epsilon subunits. The polypeptide is ATP synthase subunit c (Buchnera aphidicola subsp. Baizongia pistaciae (strain Bp)).